The following is a 343-amino-acid chain: L-threonine 3-dehydrogenase (343 aa).

Position 40 (C40) interacts with Zn(2+). Catalysis depends on charge relay system residues T42 and H45. The Zn(2+) site is built by H65, E66, C95, C98, C101, and C109. NAD(+) contacts are provided by residues I177, D197, R202, 264–266, and 288–289; these read LGI and IY.

It belongs to the zinc-containing alcohol dehydrogenase family. In terms of assembly, homotetramer. Requires Zn(2+) as cofactor.

It is found in the cytoplasm. It catalyses the reaction L-threonine + NAD(+) = (2S)-2-amino-3-oxobutanoate + NADH + H(+). It participates in amino-acid degradation; L-threonine degradation via oxydo-reductase pathway; glycine from L-threonine: step 1/2. In terms of biological role, catalyzes the NAD(+)-dependent oxidation of L-threonine to 2-amino-3-ketobutyrate. The polypeptide is L-threonine 3-dehydrogenase (Vibrio vulnificus (strain CMCP6)).